The following is a 2298-amino-acid chain: Protein Ycf2 (2298 aa).

1640-1647 serves as a coordination point for ATP; it reads GSIGTGRS.

This sequence belongs to the Ycf2 family.

Its subcellular location is the plastid. It localises to the chloroplast stroma. In terms of biological role, probable ATPase of unknown function. Its presence in a non-photosynthetic plant (Epifagus virginiana) and experiments in tobacco indicate that it has an essential function which is probably not related to photosynthesis. The protein is Protein Ycf2 of Carica papaya (Papaya).